The primary structure comprises 474 residues: tRNA-2-methylthio-N(6)-dimethylallyladenosine synthase (474 aa).

An MTTase N-terminal domain is found at 3-120 (KKLHIKTWGC…LPEMIEQVRR (118 aa)). [4Fe-4S] cluster contacts are provided by Cys12, Cys49, Cys83, Cys157, Cys161, and Cys164. The region spanning 143-375 (RAEGPTAFVS…QDRITQQAMR (233 aa)) is the Radical SAM core domain. One can recognise a TRAM domain in the interval 378-441 (RHMMGTVQRI…TNSLRGVFIR (64 aa)).

This sequence belongs to the methylthiotransferase family. MiaB subfamily. Monomer. The cofactor is [4Fe-4S] cluster.

The protein resides in the cytoplasm. The enzyme catalyses N(6)-dimethylallyladenosine(37) in tRNA + (sulfur carrier)-SH + AH2 + 2 S-adenosyl-L-methionine = 2-methylsulfanyl-N(6)-dimethylallyladenosine(37) in tRNA + (sulfur carrier)-H + 5'-deoxyadenosine + L-methionine + A + S-adenosyl-L-homocysteine + 2 H(+). In terms of biological role, catalyzes the methylthiolation of N6-(dimethylallyl)adenosine (i(6)A), leading to the formation of 2-methylthio-N6-(dimethylallyl)adenosine (ms(2)i(6)A) at position 37 in tRNAs that read codons beginning with uridine. This is tRNA-2-methylthio-N(6)-dimethylallyladenosine synthase from Shewanella baltica (strain OS185).